The following is a 166-amino-acid chain: Ureidoglycolate lyase (166 aa).

It belongs to the ureidoglycolate lyase family. In terms of assembly, homodimer. Ni(2+) is required as a cofactor.

The enzyme catalyses (S)-ureidoglycolate = urea + glyoxylate. Its pathway is nitrogen metabolism; (S)-allantoin degradation. In terms of biological role, catalyzes the catabolism of the allantoin degradation intermediate (S)-ureidoglycolate, generating urea and glyoxylate. Involved in the utilization of allantoin as nitrogen source. In Rhizobium etli (strain ATCC 51251 / DSM 11541 / JCM 21823 / NBRC 15573 / CFN 42), this protein is Ureidoglycolate lyase.